The chain runs to 489 residues: Squalene monooxygenase (489 aa).

A helical transmembrane segment spans residues 10–30 (VTYDALIVGAGVIGPCVATAL). FAD is bound by residues 21 to 22 (VI), 41 to 42 (ER), Arg49, Arg151, Val167, Asp328, and Met341. Helical transmembrane passes span 426-446 (FLAG…AVAF) and 464-484 (ALLE…PFLV).

The protein belongs to the squalene monooxygenase family. The cofactor is FAD.

It is found in the microsome membrane. The protein localises to the endoplasmic reticulum membrane. It carries out the reaction squalene + reduced [NADPH--hemoprotein reductase] + O2 = (S)-2,3-epoxysqualene + oxidized [NADPH--hemoprotein reductase] + H2O + H(+). The protein operates within terpene metabolism; lanosterol biosynthesis; lanosterol from farnesyl diphosphate: step 2/3. Its function is as follows. Catalyzes the stereospecific oxidation of squalene to (S)-2,3-epoxysqualene, and is considered to be a rate-limiting enzyme in steroid biosynthesis. The sequence is that of Squalene monooxygenase (ERG1) from Candida glabrata (strain ATCC 2001 / BCRC 20586 / JCM 3761 / NBRC 0622 / NRRL Y-65 / CBS 138) (Yeast).